The primary structure comprises 443 residues: Glutamate-1-semialdehyde 2,1-aminomutase (443 aa).

The span at 1–16 shows a compositional bias: low complexity; the sequence is MSVNADSQHSNNSSHQ. A disordered region spans residues 1-22; that stretch reads MSVNADSQHSNNSSHQASEKAF. An N6-(pyridoxal phosphate)lysine modification is found at lysine 277.

Belongs to the class-III pyridoxal-phosphate-dependent aminotransferase family. HemL subfamily. As to quaternary structure, homodimer. Pyridoxal 5'-phosphate is required as a cofactor.

The protein localises to the cytoplasm. The catalysed reaction is (S)-4-amino-5-oxopentanoate = 5-aminolevulinate. It functions in the pathway porphyrin-containing compound metabolism; protoporphyrin-IX biosynthesis; 5-aminolevulinate from L-glutamyl-tRNA(Glu): step 2/2. The sequence is that of Glutamate-1-semialdehyde 2,1-aminomutase from Corynebacterium jeikeium (strain K411).